The chain runs to 417 residues: 1-deoxy-D-xylulose 5-phosphate reductoisomerase (417 aa).

Thr10, Gly11, Ser12, Ile13, Gly36, Arg37, Asn38, and Asn130 together coordinate NADPH. Lys131 provides a ligand contact to 1-deoxy-D-xylulose 5-phosphate. Glu132 serves as a coordination point for NADPH. Asp156 contributes to the Mn(2+) binding site. Residues Ser157, Glu158, Ser194, and His217 each contribute to the 1-deoxy-D-xylulose 5-phosphate site. Glu158 provides a ligand contact to Mn(2+). An NADPH-binding site is contributed by Gly223. 1-deoxy-D-xylulose 5-phosphate contacts are provided by Ser230, Asn235, Lys236, and Glu239. Glu239 contacts Mn(2+).

Belongs to the DXR family. It depends on Mg(2+) as a cofactor. Mn(2+) is required as a cofactor.

It catalyses the reaction 2-C-methyl-D-erythritol 4-phosphate + NADP(+) = 1-deoxy-D-xylulose 5-phosphate + NADPH + H(+). Its pathway is isoprenoid biosynthesis; isopentenyl diphosphate biosynthesis via DXP pathway; isopentenyl diphosphate from 1-deoxy-D-xylulose 5-phosphate: step 1/6. Catalyzes the NADPH-dependent rearrangement and reduction of 1-deoxy-D-xylulose-5-phosphate (DXP) to 2-C-methyl-D-erythritol 4-phosphate (MEP). The chain is 1-deoxy-D-xylulose 5-phosphate reductoisomerase from Synechococcus sp. (strain CC9902).